The primary structure comprises 224 residues: UPF0758 protein Sde_3678 (224 aa).

In terms of domain architecture, MPN spans 102-224; sequence SLTSTTAVKQ…AVSFAERGWI (123 aa). Histidine 173, histidine 175, and aspartate 186 together coordinate Zn(2+). Positions 173-186 match the JAMM motif motif; it reads HNHPSGIAEPSEPD.

Belongs to the UPF0758 family.

The protein is UPF0758 protein Sde_3678 of Saccharophagus degradans (strain 2-40 / ATCC 43961 / DSM 17024).